The chain runs to 142 residues: Large ribosomal subunit protein uL13 (142 aa).

The protein belongs to the universal ribosomal protein uL13 family. As to quaternary structure, part of the 50S ribosomal subunit.

Functionally, this protein is one of the early assembly proteins of the 50S ribosomal subunit, although it is not seen to bind rRNA by itself. It is important during the early stages of 50S assembly. In Methanosphaera stadtmanae (strain ATCC 43021 / DSM 3091 / JCM 11832 / MCB-3), this protein is Large ribosomal subunit protein uL13.